Consider the following 968-residue polypeptide: Probable transport protein MmpL2 (968 aa).

11 consecutive transmembrane segments (helical) span residues 22-42 (FAVV…LAVP), 204-224 (VIAA…LVLI), 245-265 (IFSL…AAST), 297-317 (AHVI…LSFA), 328-348 (PIAI…PAVL), 378-398 (WPGP…LALP), 763-783 (YDLL…MMII), 787-807 (VVAA…SFGL), 815-835 (ILGI…LLAV), 866-886 (TGGV…LFVF), and 890-910 (RIIG…TLVV).

Belongs to the resistance-nodulation-cell division (RND) (TC 2.A.6) family. MmpL subfamily.

Its subcellular location is the cell membrane. The sequence is that of Probable transport protein MmpL2 (mmpL2) from Mycobacterium tuberculosis (strain CDC 1551 / Oshkosh).